A 509-amino-acid polypeptide reads, in one-letter code: ATP synthase subunit alpha (509 aa).

169-176 contacts ATP; that stretch reads GDRQTGKT.

This sequence belongs to the ATPase alpha/beta chains family. In terms of assembly, F-type ATPases have 2 components, CF(1) - the catalytic core - and CF(0) - the membrane proton channel. CF(1) has five subunits: alpha(3), beta(3), gamma(1), delta(1), epsilon(1). CF(0) has three main subunits: a(1), b(2) and c(9-12). The alpha and beta chains form an alternating ring which encloses part of the gamma chain. CF(1) is attached to CF(0) by a central stalk formed by the gamma and epsilon chains, while a peripheral stalk is formed by the delta and b chains.

The protein localises to the cell inner membrane. It carries out the reaction ATP + H2O + 4 H(+)(in) = ADP + phosphate + 5 H(+)(out). Functionally, produces ATP from ADP in the presence of a proton gradient across the membrane. The alpha chain is a regulatory subunit. The sequence is that of ATP synthase subunit alpha from Parvibaculum lavamentivorans (strain DS-1 / DSM 13023 / NCIMB 13966).